Reading from the N-terminus, the 455-residue chain is UDP-N-acetylmuramoylalanine--D-glutamate ligase (455 aa).

117–123 lines the ATP pocket; sequence GTNGKTT.

This sequence belongs to the MurCDEF family.

The protein localises to the cytoplasm. It catalyses the reaction UDP-N-acetyl-alpha-D-muramoyl-L-alanine + D-glutamate + ATP = UDP-N-acetyl-alpha-D-muramoyl-L-alanyl-D-glutamate + ADP + phosphate + H(+). It functions in the pathway cell wall biogenesis; peptidoglycan biosynthesis. In terms of biological role, cell wall formation. Catalyzes the addition of glutamate to the nucleotide precursor UDP-N-acetylmuramoyl-L-alanine (UMA). In Pelotomaculum thermopropionicum (strain DSM 13744 / JCM 10971 / SI), this protein is UDP-N-acetylmuramoylalanine--D-glutamate ligase.